We begin with the raw amino-acid sequence, 606 residues long: Mitogen-activated protein kinase kinase kinase 7 (606 aa).

Positions 1–300 (MSTASAASSS…FPGADEPLQY (300 aa)) are interaction with MAPK8IP1. In terms of domain architecture, Protein kinase spans 36 to 291 (IEVEEVVGRG…KIMTHLMRYF (256 aa)). ATP is bound by residues 42 to 50 (VGRGAFGVV) and Lys63. Lys72 is covalently cross-linked (Glycyl lysine isopeptide (Lys-Gly) (interchain with G-Cter in ubiquitin)). Catalysis depends on Asp156, which acts as the Proton acceptor. Lys158 is covalently cross-linked (Glycyl lysine isopeptide (Lys-Gly) (interchain with G-Cter in ubiquitin)). A phosphothreonine; by autocatalysis mark is found at Thr184 and Thr187. Residue Ser192 is modified to Phosphoserine; by autocatalysis. A Glycyl lysine isopeptide (Lys-Gly) (interchain with G-Cter in ubiquitin) cross-link involves residue Lys209. Disordered regions lie at residues 301–338 (PCQY…MEQV) and 354–391 (KNQA…MSAD). Over residues 306–338 (DEGQSNSATSTGSFMDIASTNTSNKSDTNMEQV) the composition is skewed to polar residues. Residues 361-375 (SESGRLSLGASRGSS) show a composition bias toward low complexity. Residues Ser367, Ser389, and Ser439 each carry the phosphoserine modification. The segment covering 443–452 (LTVTGTEPGQ) has biased composition (polar residues). The tract at residues 443-493 (LTVTGTEPGQVSSRSSSPSVRMITTSGPTSEKPTRSHPWTPDDSTDTNGSD) is disordered. Positions 453-463 (VSSRSSSPSVR) are enriched in low complexity. The residue at position 455 (Ser455) is a Phosphoserine. Over residues 464 to 473 (MITTSGPTSE) the composition is skewed to polar residues.

The protein belongs to the protein kinase superfamily. STE Ser/Thr protein kinase family. MAP kinase kinase kinase subfamily. As to quaternary structure, can form homodimer. Binds both upstream activators and downstream substrates in multimolecular complexes. Interacts with TAB1/MAP3K7IP1, TAB2/MAP3K7IP2 and TAB3/MAP3K7IP3. Identified in the TRIKA2 complex composed of MAP3K7/TAK1, TAB1/MAP3K7IP1 and TAB2/MAP3K7IP2. Interacts with PPM1L and PPM1B/PP2CB. Interaction with PP2A and PPP6C leads to its repressed activity. Interacts with TRAF6 and TAB1/MAP3K7IP1; during IL-1 signaling. Interacts with TAOK1 and TAOK2; interaction with TAOK2 interferes with MAP3K7 interaction with IKKA, thus preventing NF-kappa-B activation. Interacts with DYNC2I2 (via WD domains). Interacts with CYLD and RBCK1. Interacts with TGFBR1; induces MAP3K7/TAK1 activation by TRAF6. Interacts with MAPK8IP1 and SMAD6. Interacts with isoform 1 of VRK2. Interacts with DAB2; the interaction is induced by TGF-beta stimulation and may mediate TGF-beta stimulated JNK activation. Interacts with TRIM5. Part of a complex containing ITCH, NDFIP1 and MAP3K7. Interacts with IFIT5; the interaction synergizes the recruitment of IKK to MAP3K7 and enhances IKK phosphorylation. Interacts with PLEKHM1 (via N- and C-terminus). Found in a complex with SH3RF1, RAC2, MAP2K7/MKK7, MAPK8IP1/JIP1, MAPK8/JNK1 and MAPK9/JNK2. Interacts with SASH1. Interacts with RIPK1. Mg(2+) serves as cofactor. In terms of processing, association with TAB1/MAP3K7IP1 promotes autophosphorylation at Ser-192 and subsequent activation. Association with TAB2/MAP3K7IP2, itself associated with free unanchored Lys-63 polyubiquitin chain, promotes autophosphorylation and subsequent activation of MAP3K7. Dephosphorylation at Ser-192 by PPM1B/PP2CB and at Thr-187 by PP2A and PPP6C leads to inactivation. 'Lys-48'-linked polyubiquitination at Lys-72 is induced by TNFalpha, and leads to proteasomal degradation. Undergoes 'Lys-48'-linked polyubiquitination catalyzed by ITCH. 'Lys-63'-linked polyubiquitination at Lys-158 by TRIM8 does not lead to proteasomal degradation but contributes to autophosphorylation and activation. Deubiquitinated by CYLD, a protease that selectively cleaves 'Lys-63'-linked ubiquitin chains. Deubiquitinated by USP19; leading to negative regulation of TNF-alpha- and IL-1beta-triggered NF-kappa-B activation.

It is found in the cytoplasm. Its subcellular location is the cell membrane. It catalyses the reaction L-seryl-[protein] + ATP = O-phospho-L-seryl-[protein] + ADP + H(+). The enzyme catalyses L-threonyl-[protein] + ATP = O-phospho-L-threonyl-[protein] + ADP + H(+). Its activity is regulated as follows. Activated by pro-inflammatory cytokines and in response to physical and chemical stresses, including osmotic stress, oxidative stress, arsenic and ultraviolet light irradiation. Activated by 'Lys-63'-linked polyubiquitination and by autophosphorylation. Association with TAB1/MAP3K7IP1 and TAB2/MAP3K7IP2 promotes activation through autophosphorylation, whereas PPM1B/PP2CB, PP2A and PPP6C dephosphorylation leads to inactivation. Ceramides are also able to activate MAP3K7/TAK1. In terms of biological role, serine/threonine kinase which acts as an essential component of the MAP kinase signal transduction pathway. Plays an important role in the cascades of cellular responses evoked by changes in the environment. Mediates signal transduction of TRAF6, various cytokines including interleukin-1 (IL-1), transforming growth factor-beta (TGFB), TGFB-related factors like BMP2 and BMP4, toll-like receptors (TLR), tumor necrosis factor receptor CD40 and B-cell receptor (BCR). Once activated, acts as an upstream activator of the MKK/JNK signal transduction cascade and the p38 MAPK signal transduction cascade through the phosphorylation and activation of several MAP kinase kinases like MAP2K1/MEK1, MAP2K3/MKK3, MAP2K6/MKK6 and MAP2K7/MKK7. These MAP2Ks in turn activate p38 MAPKs and c-jun N-terminal kinases (JNKs); both p38 MAPK and JNK pathways control the transcription factors activator protein-1 (AP-1). Independently of MAP2Ks and p38 MAPKs, acts as a key activator of NF-kappa-B by promoting activation of the I-kappa-B-kinase (IKK) core complex. Mechanistically, recruited to polyubiquitin chains of RIPK2 and IKBKG/NEMO via TAB2/MAP3K7IP2 and TAB3/MAP3K7IP3, and catalyzes phosphorylation and activation of IKBKB/IKKB component of the IKK complex, leading to NF-kappa-B activation. In osmotic stress signaling, plays a major role in the activation of MAPK8/JNK1, but not that of NF-kappa-B. Promotes TRIM5 capsid-specific restriction activity. Phosphorylates RIPK1 at 'Ser-321' which positively regulates RIPK1 interaction with RIPK3 to promote necroptosis but negatively regulates RIPK1 kinase activity and its interaction with FADD to mediate apoptosis. Phosphorylates STING1 in response to cGAMP-activation, promoting association between STEEP1 and STING1 and STING1 translocation to COPII vesicles. The chain is Mitogen-activated protein kinase kinase kinase 7 (MAP3K7) from Pongo abelii (Sumatran orangutan).